We begin with the raw amino-acid sequence, 252 residues long: MAMTPQLAFSRMPPGFRFQPTDEQLVVDYLQRRTAAQPCVTPDITDIDVYNVDPWQLPAMAMYGSDHDRYFFTMAAREAQARRTTPSGFWKPTGTKKTIFVVAGGHEVPTAVKRRFVFYLGHHQPSGSNNNNKTSWIMHEYRLMNSPRAAVPSSSSVNRLPTDDLTEEMVLCRISNKDLPKPPFIHNSLLQFSSVGLNGDGYNYLILDHLEPPAMEYPNVGIGNVDDAAAGTDDPGDLDEEIDDSMQRNHGG.

Residues 12–177 enclose the NAC domain; the sequence is MPPGFRFQPT…EMVLCRISNK (166 aa). A DNA-binding region spans residues 110–183; the sequence is TAVKRRFVFY…ISNKDLPKPP (74 aa). Residues 225–252 are disordered; the sequence is VDDAAAGTDDPGDLDEEIDDSMQRNHGG. Residues 234–244 are compositionally biased toward acidic residues; that stretch reads DPGDLDEEIDD.

As to quaternary structure, forms heterodimers with NAC26. In terms of tissue distribution, expressed in stems and panicles. Expressed in developing endosperm.

The protein localises to the nucleus. It is found in the cytoplasm. Transcription factor involved in the regulation of seed size. Binds to DNA-specific sequences of CLPD1 and OAT promoters in vitro. This Oryza sativa subsp. japonica (Rice) protein is NAC domain-containing protein 23.